We begin with the raw amino-acid sequence, 294 residues long: Extracellular metalloprotease TRV_07111 (294 aa).

Positions 1–19 are cleaved as a signal peptide; it reads MRFSVVFAAIAALSSVVTA. N-linked (GlcNAc...) asparagine glycosylation is found at Asn-49, Asn-54, and Asn-74. Zn(2+) is bound at residue His-185. The active site involves Glu-186. A Zn(2+)-binding site is contributed by His-189. The cysteines at positions 224 and 250 are disulfide-linked.

Belongs to the peptidase M43B family.

The protein resides in the secreted. Its function is as follows. Secreted metalloproteinase that allows assimilation of proteinaceous substrates. Plays a pivotal role as a pathogenicity determinant during infections and contributes to the ability of the pathogen to persist within the mammalian host. The sequence is that of Extracellular metalloprotease TRV_07111 from Trichophyton verrucosum (strain HKI 0517).